Reading from the N-terminus, the 2287-residue chain is Protein Ycf2 (2287 aa).

1641-1648 (GSIGTGRS) is a binding site for ATP.

This sequence belongs to the Ycf2 family.

It is found in the plastid. It localises to the chloroplast stroma. In terms of biological role, probable ATPase of unknown function. Its presence in a non-photosynthetic plant (Epifagus virginiana) and experiments in tobacco indicate that it has an essential function which is probably not related to photosynthesis. The chain is Protein Ycf2 from Lepidium virginicum (Virginia pepperweed).